We begin with the raw amino-acid sequence, 250 residues long: NAD-dependent protein deacylase 1 (250 aa).

Residues 1 to 250 (MRAVVELLAG…PELLRRAFPG (250 aa)) form the Deacetylase sirtuin-type domain. 19–39 (GAGVSAESGIPTFRDALGGLW) lines the NAD(+) pocket. Substrate is bound by residues Y64 and R67. 98–101 (QNVD) contributes to the NAD(+) binding site. The active-site Proton acceptor is the H116. Zn(2+)-binding residues include C124, C127, C152, and C155. NAD(+) is bound by residues 192–194 (GTS), 218–220 (NPQ), and A236.

This sequence belongs to the sirtuin family. Class III subfamily. Zn(2+) is required as a cofactor.

Its subcellular location is the cytoplasm. The enzyme catalyses N(6)-acetyl-L-lysyl-[protein] + NAD(+) + H2O = 2''-O-acetyl-ADP-D-ribose + nicotinamide + L-lysyl-[protein]. It carries out the reaction N(6)-succinyl-L-lysyl-[protein] + NAD(+) + H2O = 2''-O-succinyl-ADP-D-ribose + nicotinamide + L-lysyl-[protein]. NAD-dependent lysine deacetylase and desuccinylase that specifically removes acetyl and succinyl groups on target proteins. Modulates the activities of several proteins which are inactive in their acylated form. The protein is NAD-dependent protein deacylase 1 of Pseudomonas aeruginosa (strain ATCC 15692 / DSM 22644 / CIP 104116 / JCM 14847 / LMG 12228 / 1C / PRS 101 / PAO1).